The sequence spans 120 residues: UPF0145 protein Bcenmc03_5217 (120 aa).

It belongs to the UPF0145 family.

This Burkholderia orbicola (strain MC0-3) protein is UPF0145 protein Bcenmc03_5217.